We begin with the raw amino-acid sequence, 916 residues long: Chitin synthase B (916 aa).

2 disordered regions span residues 1-75 (MAYH…GYSL) and 118-141 (ARSETSSTEAWRQRQAGAAGGGNG). A compositionally biased stretch (basic and acidic residues) spans 14–26 (HTYDDGHQLRDLS). Over residues 59 to 75 (RGLTASPVQRPTSGYSL) the composition is skewed to polar residues. The next 7 membrane-spanning stretches (helical) occupy residues 544-561 (RWLNGSFAAGIYSLMHFG), 588-608 (FLTWFSLASYWLTTSVIMDLV), 629-649 (IINTLVKYIYLAFLLLQFILA), 664-684 (SFVAFGIIQLYVVVDALYLVV), 716-736 (IIIIALAATFGLYFVASFMYL), 845-865 (LVTLWLFSNGLLAVCITSEGL), and 884-904 (ALLWSNAVVALIRFIGATWFL).

This sequence belongs to the chitin synthase family. Class III subfamily. Interacts with kibesin kinA. Post-translationally, activity requires trypsin activation, suggesting a zymogenic nature. Phosphorylated at yet unidentified residues in a N-terminal disordered region-dependent manner.

The protein resides in the cell membrane. It localises to the cell tip. It is found in the cell septum. It carries out the reaction [(1-&gt;4)-N-acetyl-beta-D-glucosaminyl](n) + UDP-N-acetyl-alpha-D-glucosamine = [(1-&gt;4)-N-acetyl-beta-D-glucosaminyl](n+1) + UDP + H(+). With respect to regulation, activity is stimulated by Mg(2+) and is inhibited by polyoxin D. Polymerizes chitin, a structural polymer of the cell wall and septum, by transferring the sugar moiety of UDP-GlcNAc to the non-reducing end of the growing chitin polymer. Does not substantially contribute to the rigidity of the cell wall but is necessary for normal hyphal growth and organization. In addition to its functions in the formation of normal cell walls of hyphae, is also involved in conidiophore and conidia development. This Emericella nidulans (strain FGSC A4 / ATCC 38163 / CBS 112.46 / NRRL 194 / M139) (Aspergillus nidulans) protein is Chitin synthase B.